Consider the following 144-residue polypeptide: Large ribosomal subunit protein uL11 (144 aa).

This sequence belongs to the universal ribosomal protein uL11 family. Part of the ribosomal stalk of the 50S ribosomal subunit. Interacts with L10 and the large rRNA to form the base of the stalk. L10 forms an elongated spine to which L12 dimers bind in a sequential fashion forming a multimeric L10(L12)X complex. In terms of processing, one or more lysine residues are methylated.

Its function is as follows. Forms part of the ribosomal stalk which helps the ribosome interact with GTP-bound translation factors. The protein is Large ribosomal subunit protein uL11 of Deinococcus geothermalis (strain DSM 11300 / CIP 105573 / AG-3a).